A 148-amino-acid polypeptide reads, in one-letter code: MALYEHVFLARQDLSAQQVDALVEQYKGVIESGGGKVGRIENWGVKSLAYRIKKNRKAYFTLMDLDAPAEAVKEMERQMGISEDILRFMTIRVEAHEEGPSAMLQRRDDRERGDRGDRGPRRDFDDRGPRRPREDDRPRRSREDEGDE.

Residues 97-148 (EEGPSAMLQRRDDRERGDRGDRGPRRDFDDRGPRRPREDDRPRRSREDEGDE) are disordered.

Belongs to the bacterial ribosomal protein bS6 family.

Functionally, binds together with bS18 to 16S ribosomal RNA. The sequence is that of Small ribosomal subunit protein bS6 from Chelativorans sp. (strain BNC1).